A 307-amino-acid chain; its full sequence is Nicotinamide/nicotinic acid mononucleotide adenylyltransferase 2 (307 aa).

Residues Ser-16 and Phe-17 each coordinate NAD(+). His-24 contacts ATP. Residues Trp-92, Thr-95, Gly-200, Asp-202, Leu-212, Trp-213, and Arg-232 each contribute to the NAD(+) site. Thr-271 to Arg-274 contributes to the ATP binding site.

Belongs to the eukaryotic NMN adenylyltransferase family. Monomer. It depends on Mg(2+) as a cofactor.

The protein resides in the golgi apparatus membrane. Its subcellular location is the cytoplasmic vesicle membrane. It is found in the cytoplasm. The protein localises to the cell projection. It localises to the axon. The enzyme catalyses beta-nicotinamide D-ribonucleotide + ATP + H(+) = diphosphate + NAD(+). The catalysed reaction is nicotinate beta-D-ribonucleotide + ATP + H(+) = deamido-NAD(+) + diphosphate. It functions in the pathway cofactor biosynthesis; NAD(+) biosynthesis; NAD(+) from nicotinamide D-ribonucleotide: step 1/1. The protein operates within cofactor biosynthesis; NAD(+) biosynthesis; deamido-NAD(+) from nicotinate D-ribonucleotide: step 1/1. In terms of biological role, nicotinamide/nicotinate-nucleotide adenylyltransferase that acts as an axon maintenance factor. Axon survival factor required for the maintenance of healthy axons: acts by delaying Wallerian axon degeneration, an evolutionarily conserved process that drives the loss of damaged axons. Catalyzes the formation of NAD(+) from nicotinamide mononucleotide (NMN) and ATP. Can also use the deamidated form; nicotinic acid mononucleotide (NaMN) as substrate but with a lower efficiency. Also catalyzes the reverse reaction, i.e. the pyrophosphorolytic cleavage of NAD(+). For the pyrophosphorolytic activity prefers NAD(+), NADH and NaAD as substrates and degrades nicotinic acid adenine dinucleotide phosphate (NHD) less effectively. Also acts as an activator of ADP-ribosylation by supporting the catalytic activity of PARP16 and promoting mono-ADP-ribosylation of ribosomes by PARP16. May be involved in the maintenance of axonal integrity. The protein is Nicotinamide/nicotinic acid mononucleotide adenylyltransferase 2 (nmnat2) of Xenopus tropicalis (Western clawed frog).